The sequence spans 214 residues: MVKVSAENFLYFAISVLVNLLFLKILYIYLFLPNISPPQAFTPLSVKIEEIKAPPKKPGKPQKKVVKKKPEAVSVSQAPEKGDVPVEVKEEKEVSLLPELEKKIKERLKKRKEVKQIGEISAVVSKQKVEIRLGSRKLVHVPPPPVFHVKEYPSLVRIKIWVNPEGRVIRAIIIQRSGVTEVDEGLLRFTKKLKFEPIEVPEVQEGVITFTFST.

A helical membrane pass occupies residues 9–31; sequence FLYFAISVLVNLLFLKILYIYLF. Residues 53-74 form a disordered region; it reads APPKKPGKPQKKVVKKKPEAVS. Positions 54-67 are enriched in basic residues; that stretch reads PPKKPGKPQKKVVK.

The protein localises to the membrane. This is an uncharacterized protein from Aquifex aeolicus (strain VF5).